Reading from the N-terminus, the 332-residue chain is BRISC and BRCA1-A complex member 1 (332 aa).

Methionine 1 carries the N-acetylmethionine modification. Residues 1–88 are disordered; the sequence is MEVAEPSCPT…PPPAPEVQVR (88 aa). Positions 10-23 are enriched in acidic residues; that stretch reads TEEEEEEEEEEEQS. A phosphoserine mark is found at serine 32, serine 52, and serine 60. The span at 70 to 83 shows a compositional bias: pro residues; the sequence is GAGPKPWQVPPPAP. Positions 98-301 are VWFA-like; it reads VIICLDLSEE…LELHNCMAKL (204 aa).

This sequence belongs to the BABAM1 family. In terms of assembly, component of the ARISC complex, at least composed of UIMC1/RAP80, ABRAXAS1, BRCC3/BRCC36, BABAM2 and BABAM1/NBA1. Component of the BRCA1-A complex, at least composed of BRCA1, BARD1, UIMC1/RAP80, ABRAXAS1, BRCC3/BRCC36, BABAM2 and BABAM1/NBA1. In the BRCA1-A complex, interacts directly with ABRAXAS1 and BABAM2. Component of the BRISC complex, at least composed of ABRAXAS2, BRCC3/BRCC36, BABAM2 and BABAM1/NBA1. Identified in a complex with SHMT2 and the other subunits of the BRISC complex.

The protein localises to the cytoplasm. It localises to the nucleus. Its function is as follows. Component of the BRCA1-A complex, a complex that specifically recognizes 'Lys-63'-linked ubiquitinated histones H2A and H2AX at DNA lesions sites, leading to target the BRCA1-BARD1 heterodimer to sites of DNA damage at double-strand breaks (DSBs). The BRCA1-A complex also possesses deubiquitinase activity that specifically removes 'Lys-63'-linked ubiquitin on histones H2A and H2AX. In the BRCA1-A complex, it is required for the complex integrity and its localization at DSBs. Component of the BRISC complex, a multiprotein complex that specifically cleaves 'Lys-63'-linked ubiquitin in various substrates. In these 2 complexes, it is probably required to maintain the stability of BABAM2 and help the 'Lys-63'-linked deubiquitinase activity mediated by BRCC3/BRCC36 component. The BRISC complex is required for normal mitotic spindle assembly and microtubule attachment to kinetochores via its role in deubiquitinating NUMA1. Plays a role in interferon signaling via its role in the deubiquitination of the interferon receptor IFNAR1; deubiquitination increases IFNAR1 activity by enhancing its stability and cell surface expression. Down-regulates the response to bacterial lipopolysaccharide (LPS) via its role in IFNAR1 deubiquitination. The chain is BRISC and BRCA1-A complex member 1 (BABAM1) from Bos taurus (Bovine).